Consider the following 1140-residue polypeptide: Multiple epidermal growth factor-like domains protein 10 (1140 aa).

The first 25 residues, 1 to 25 (MVISLNSCLSFICLLLCHWIGTASP), serve as a signal peptide directing secretion. Residues 1–857 (MVISLNSCLS…ALPADSYQIG (857 aa)) are necessary for interaction with AP2M1, self-assembly and formation of the irregular, mosaic-like adhesion pattern. The Extracellular segment spans residues 26–857 (LNLEDPNVCS…ALPADSYQIG (832 aa)). Positions 30–107 (DPNVCSHWES…FYESGEMCVP (78 aa)) constitute an EMI domain. Disulfide bonds link Cys-34–Cys-95, Cys-60–Cys-69, Cys-94–Cys-105, Cys-109–Cys-118, Cys-113–Cys-124, Cys-126–Cys-135, Cys-148–Cys-160, Cys-154–Cys-167, Cys-169–Cys-178, Cys-191–Cys-203, Cys-197–Cys-210, Cys-212–Cys-221, Cys-234–Cys-246, Cys-240–Cys-253, Cys-255–Cys-264, Cys-281–Cys-289, Cys-283–Cys-296, Cys-298–Cys-307, Cys-320–Cys-332, Cys-326–Cys-339, Cys-341–Cys-350, Cys-409–Cys-421, Cys-415–Cys-428, Cys-430–Cys-439, Cys-456–Cys-464, Cys-458–Cys-471, Cys-473–Cys-482, Cys-495–Cys-507, Cys-501–Cys-514, Cys-516–Cys-525, Cys-542–Cys-550, Cys-544–Cys-557, Cys-559–Cys-568, Cys-581–Cys-593, Cys-587–Cys-600, Cys-602–Cys-611, Cys-669–Cys-681, Cys-675–Cys-688, Cys-690–Cys-699, Cys-716–Cys-724, Cys-718–Cys-731, Cys-733–Cys-742, Cys-755–Cys-767, Cys-761–Cys-774, Cys-776–Cys-785, Cys-802–Cys-810, Cys-804–Cys-817, and Cys-819–Cys-828. EGF-like domains follow at residues 106–136 (VPHCADKCVHGRCIAPNTCQCEPGWGGTNCS), 144–179 (WGPHCTSRCQCKNGALCNPITGACHCAAGFRGWRCE), 187–222 (YGNDCHQRCQCQNGATCDHVTGECRCPPGYTGAFCE), 230–265 (HGPQCEQRCPCQNGGVCHHVTGECSCPSGWMGTVCG), 278–308 (SQECQCHNGGTCDAATGQCHCSPGYTGERCQ), 316–351 (YGVLCAETCQCVNGGKCYHVSGACLCEAGFAGERCE), 405–440 (YGEACQQICSCQNGADCDSVTGKCTCAPGFKGIDCS), 453–483 (SSRCGCKNDAVCSPVDGSCTCKAGWHGVDCS), 491–526 (WGFGCNLTCQCLNGGACNTLDGTCTCAPGWRGEKCE), 539–569 (AERCDCSHADGCHPTTGHCRCLPGWSGVHCD), 577–612 (WGPNCSLPCYCKNGASCSPDDGICECAPGFRGTTCQ), 665–700 (FGKNCAGICTCTNNGTCNPIDRSCQCYPGWIGSDCS), 713–743 (IHTCNCHNGAFCSAYDGECKCTPGWTGLYCT), 751–786 (YGKDCALICQCQNGADCDHISGQCTCRTGFMGRHCE), and 799–829 (RQICDCLNNSTCDHITGTCYCSPGWKGARCD). An N-linked (GlcNAc...) asparagine glycan is attached at Asn-134. Residue Asn-496 is glycosylated (N-linked (GlcNAc...) asparagine). The helical transmembrane segment at 858–878 (AIAGIIILVLVVLFLLALFII) threads the bilayer. The Cytoplasmic portion of the chain corresponds to 879–1140 (YRHKQKGKES…SSSNSSSSSE (262 aa)). Positions 945–1140 (RDRMTVTKSK…SSSNSSSSSE (196 aa)) are necessary for formation of large intracellular vacuoles. Residue Tyr-1030 is modified to Phosphotyrosine; by SRC. Residues 1111-1140 (YDLLPVRDSSSSPKQEDSGGSSSNSSSSSE) are disordered. Over residues 1128–1140 (SGGSSSNSSSSSE) the composition is skewed to low complexity.

Belongs to the MEGF family. Homomer. Interacts with GULP1 and ABCA1. Interacts with AP2M1. Does not interact with MEGF11. Binds with high affinity to complement C1q. Interacts (via the cytoplasmic domain) with NOTCH1 (via NICD domain). In terms of processing, phosphorylated on tyrosine residues. Phosphorylation at Tyr-1030 may be important for muscle cell proliferation. Post-translationally, ubiquitinated; mono- and polyubiquitinated forms are detected. Expressed in muscle (at protein level).

The protein resides in the cell membrane. The protein localises to the cell projection. Its subcellular location is the phagocytic cup. Membrane receptor involved in phagocytosis by macrophages and astrocytes of apoptotic cells. Receptor for C1q, an eat-me signal, that binds phosphatidylserine expressed on the surface of apoptotic cells. Cooperates with ABCA1 within the process of engulfment. Promotes the formation of large intracellular vacuoles and may be responsible for the uptake of amyloid-beta peptides. Necessary for astrocyte-dependent apoptotic neuron clearance in the developing cerebellum. Plays role in muscle cell proliferation, adhesion and motility. Is also an essential factor in the regulation of myogenesis. Controls the balance between skeletal muscle satellite cells proliferation and differentiation through regulation of the notch signaling pathway. May also function in the mosaic spacing of specific neuron subtypes in the retina through homotypic retinal neuron repulsion. Mosaics provide a mechanism to distribute each cell type evenly across the retina, ensuring that all parts of the visual field have access to a full set of processing elements. This is Multiple epidermal growth factor-like domains protein 10 from Homo sapiens (Human).